A 275-amino-acid polypeptide reads, in one-letter code: Gene 18 protein (275 aa).

The protein belongs to the herpesviridae UL79 family.

The protein is Gene 18 protein (18) of Connochaetes taurinus (Blue wildebeest).